Reading from the N-terminus, the 1333-residue chain is Aldehyde oxidase 1 (1333 aa).

The region spanning 4–91 (PQLLFYVNGQ…GTAVTTVEGI (88 aa)) is the 2Fe-2S ferredoxin-type domain. Positions 43, 48, 51, and 73 each coordinate [2Fe-2S] cluster. Position 112 (Gln112) interacts with Mo-molybdopterin. The [2Fe-2S] cluster site is built by Cys113, Cys116, Cys148, and Cys150. Position 150 (Cys150) interacts with Mo-molybdopterin. In terms of domain architecture, FAD-binding PCMH-type spans 235-420 (FYSNRMTWIS…VSVNIPCSRK (186 aa)). FAD-binding positions include 263–270 (IVMGYTSV), Ala344, Ser353, His357, Asp366, and Leu410. Mo-molybdopterin contacts are provided by residues 801–802 (AF) and Met1042. Ser1063 is modified (phosphoserine). Residues 1083–1086 (GSVV), Gln1198, and Leu1263 contribute to the Mo-molybdopterin site. Glu1265 acts as the Proton acceptor; for azaheterocycle hydroxylase activity in catalysis.

It belongs to the xanthine dehydrogenase family. In terms of assembly, homodimer. Requires [2Fe-2S] cluster as cofactor. It depends on FAD as a cofactor. Mo-molybdopterin serves as cofactor. Post-translationally, the N-terminus is blocked. As to expression, expression in liver (at protein level). Also detected in heart, lung, spleen and kidney.

The protein localises to the cytoplasm. It catalyses the reaction an aldehyde + O2 + H2O = a carboxylate + H2O2 + H(+). The enzyme catalyses retinal + O2 + H2O = retinoate + H2O2 + H(+). Inhibited by menadione and isovanillin. Not inhibited by allopurinol, a xanthine dehydrogenase potent inhibitor. Inhibited by the flavonoids quercetin, myricetin and genistein. Nitric oxide generation is inhibited by raloxifene and competitively inhibited by an increase in oxygen levels. Oxidase with broad substrate specificity, oxidizing aromatic azaheterocycles, such as N1-methylnicotinamide, N-methylphthalazinium and phthalazine, as well as aldehydes, such as benzaldehyde, retinal, pyridoxal, and vanillin. Plays a role in the metabolism of xenobiotics and drugs containing aromatic azaheterocyclic substituents. Participates in the bioactivation of prodrugs such as famciclovir, catalyzing the oxidation step from 6-deoxypenciclovir to penciclovir, which is a potent antiviral agent. Is probably involved in the regulation of reactive oxygen species homeostasis. Is a prominent source of superoxide generation via the one-electron reduction of molecular oxygen. Also catalyzes nitric oxide (NO) production; under anaerobic conditions, reduces nitrite to NO with NADH or aldehyde as electron donor, but under aerobic conditions, NADH is the preferred substrate. These reactions may be catalyzed by several isozymes. May play a role in adipogenesis. In Rattus norvegicus (Rat), this protein is Aldehyde oxidase 1.